Reading from the N-terminus, the 1452-residue chain is ABC multidrug transporter A-1 (1452 aa).

The disordered stretch occupies residues 1–20; the sequence is MNESHEAGKNSSTNVEEREE. 5 N-linked (GlcNAc...) asparagine glycosylation sites follow: asparagine 2, asparagine 10, asparagine 228, asparagine 287, and asparagine 311. The region spanning 110–363 is the ABC transporter 1 domain; sequence LKTLSLARIA…FLQMGFVCPD (254 aa). 6 helical membrane-spanning segments follow: residues 474-494, 508-528, 554-574, 583-603, 616-636, and 725-745; these read VTISSLFGNTIISLVIASIFY, ALLFFAVLMNALGCGLEMLTL, MIMDLPYKILNAITSNIVLYF, GAFFFFVFTSFILTLTMSMFF, VLPFSAVLLLGLSMYTGFAIP, and IGVIFAYMFLLGAVYLVATDF. The ABC transporter 2 domain maps to 802-1044; it reads FQWKDVCFDI…ILIDYFVRNG (243 aa). An ATP-binding site is contributed by 838-845; the sequence is GVSGAGKT. The next 6 membrane-spanning stretches (helical) occupy residues 1153 to 1173, 1183 to 1203, 1223 to 1243, 1271 to 1291, 1297 to 1317, and 1324 to 1344; these read ALCVLSALFVGFSLFHTPNTI, IFMLLTLFGQLIQQIMPHFVA, FLIANIVVELPWNSLMSVLMF, LMIWTFLLFSSTFAHFMIAAF, AGNLGNLLFLLCLLFCGVLAT, and FWIFMYRVSPFTYLVSGMLSV. Asparagine 1350, asparagine 1365, and asparagine 1391 each carry an N-linked (GlcNAc...) asparagine glycan. A helical membrane pass occupies residues 1418 to 1438; the sequence is FGLMWVFIVFNIFAACSLYWW.

The protein belongs to the ABC transporter superfamily. ABCG family. PDR (TC 3.A.1.205) subfamily.

The protein localises to the membrane. Functionally, ABC transporter that seems not to be involved in the efflux of toxic substances, at least not the classical compounds such as itraconazole, amphotericin B, voriconazole, posaconazole, ravuconazole, or echinocandins. This chain is ABC multidrug transporter A-1, found in Aspergillus fumigatus (strain ATCC MYA-4609 / CBS 101355 / FGSC A1100 / Af293) (Neosartorya fumigata).